Reading from the N-terminus, the 452-residue chain is Putative tripartite motif-containing protein 49B (452 aa).

The RING-type zinc finger occupies 15–56 (CPICMNYFIDPVTIDCGHSFCRPCFYLNWKDSPFLVQCSECT). The segment at 88 to 129 (SEEQMCGTHRETKKMFCEVDRSLLCLLCSSSQEHRDHRHCPI) adopts a B box-type zinc-finger fold. Cys93, His96, Cys115, and His121 together coordinate Zn(2+). The region spanning 269–452 (ELSAGPITGL…LRPIFCCIHF (184 aa)) is the B30.2/SPRY domain.

It belongs to the TRIM/RBCC family.

This chain is Putative tripartite motif-containing protein 49B (TRIM49B), found in Homo sapiens (Human).